The sequence spans 312 residues: Isethionate sulfite-lyase activating enzyme (312 aa).

The Radical SAM core domain maps to 22–309 (HDGPGIRTIV…VDETRGAVTE (288 aa)). Positions 36, 40, 43, 62, 65, 68, 72, 92, 95, 100, and 104 each coordinate [4Fe-4S] cluster. 42-44 (WCS) is an S-adenosyl-L-methionine binding site. 2 4Fe-4S ferredoxin-type domains span residues 53–82 (PQVA…VNED) and 83–115 (GTLS…YGEN). Residues G144, 193 to 195 (DVK), and H267 each bind S-adenosyl-L-methionine.

Belongs to the organic radical-activating enzymes family. In terms of assembly, monomer. The cofactor is [4Fe-4S] cluster.

It carries out the reaction glycyl-[protein] + reduced [flavodoxin] + S-adenosyl-L-methionine = glycin-2-yl radical-[protein] + semiquinone [flavodoxin] + 5'-deoxyadenosine + L-methionine + H(+). It functions in the pathway organosulfur degradation; alkanesulfonate degradation. In terms of biological role, involved in an anaerobic respiration pathway that converts the sulfonate taurine (2-aminoethanesulfonate) to ammonia, acetate and sulfide. Catalyzes activation of the isethionate sulfite-lyase IslA under anaerobic conditions by generation of an organic free radical on a glycine residue, via a homolytic cleavage of S-adenosyl-L-methionine (SAM). The chain is Isethionate sulfite-lyase activating enzyme from Bilophila wadsworthia (strain 3_1_6).